Here is a 364-residue protein sequence, read N- to C-terminus: GTPase Obg (364 aa).

The 159-residue stretch at 1-159 (MKFLDEAKVY…KTIWLHLKLI (159 aa)) folds into the Obg domain. The OBG-type G domain occupies 160–327 (ADAGLVGLPN…VLRALRDIIV (168 aa)). GTP is bound by residues 166–173 (GLPNAGKS), 191–195 (FTTLH), 212–215 (DIPG), 279–282 (SQID), and 308–310 (SAV). The Mg(2+) site is built by S173 and T193. Residues 333 to 364 (EKPAKVPKLRHRDMVVTDEGEDKGGDEGDDQP) are disordered.

This sequence belongs to the TRAFAC class OBG-HflX-like GTPase superfamily. OBG GTPase family. As to quaternary structure, monomer. Mg(2+) serves as cofactor.

It localises to the cytoplasm. An essential GTPase which binds GTP, GDP and possibly (p)ppGpp with moderate affinity, with high nucleotide exchange rates and a fairly low GTP hydrolysis rate. Plays a role in control of the cell cycle, stress response, ribosome biogenesis and in those bacteria that undergo differentiation, in morphogenesis control. In Rhizobium johnstonii (strain DSM 114642 / LMG 32736 / 3841) (Rhizobium leguminosarum bv. viciae), this protein is GTPase Obg.